Consider the following 407-residue polypeptide: MTYPNLLDRFLTYVKVNTRSDEHSTTTPSTQSQVDFATNVLIPEMKRVGLQNVYYLPNGFAIGTLPANDPSLTRKIGFISHMDTADFNAEGVNPQVIENYDGGVIELGNSGFKLDPADFKSLEKYPGQTLITTDGTSLLGADDKSGIAEIMTAIEYLTAHPEIKHCEIRVGFGPDEEIGVGANKFDAEDFDVDFAYTVDGGPLGELQYETFSAAGAELHFQGRNVHPGTAKEQMVNALQLAIDFHNQLPENDRPELTEGYQGFYHLMDVTGSVEEVRASYIIRDFEKDAFEARKASMQSIADKMNAELGSYRVTLNLTDQYYNMKEVIEKDMTPITIAKAVMEDLGITPIIEPIRGGTDGSKISFMGIPTPNIFAGGENMHGRFEYVSLQTMERAVDTIIGIVAYKG.

His81 provides a ligand contact to Zn(2+). The active site involves Asp83. Residue Asp142 participates in Zn(2+) binding. The active-site Proton acceptor is the Glu176. Glu177, Asp199, and His381 together coordinate Zn(2+).

Belongs to the peptidase M20B family. Requires Zn(2+) as cofactor.

It is found in the cytoplasm. The enzyme catalyses Release of the N-terminal residue from a tripeptide.. Functionally, cleaves the N-terminal amino acid of tripeptides. The polypeptide is Peptidase T (Streptococcus pneumoniae (strain ATCC 700669 / Spain 23F-1)).